A 249-amino-acid polypeptide reads, in one-letter code: Exosome complex component Rrp41 (249 aa).

This sequence belongs to the RNase PH family. Rrp41 subfamily. Component of the archaeal exosome complex. Forms a hexameric ring-like arrangement composed of 3 Rrp41-Rrp42 heterodimers. The hexameric ring associates with a trimer of Rrp4 and/or Csl4 subunits.

It is found in the cytoplasm. Its function is as follows. Catalytic component of the exosome, which is a complex involved in RNA degradation. Has 3'-&gt;5' exoribonuclease activity. Can also synthesize heteromeric RNA-tails. The protein is Exosome complex component Rrp41 of Pyrococcus abyssi (strain GE5 / Orsay).